The chain runs to 178 residues: uncharacterized protein (178 aa).

A disordered region spans residues 64 to 103 (GVSDNTNKTTAKDNVSDKSSENEVAQPKQVTPPVDATGNT). The span at 73-84 (TAKDNVSDKSSE) shows a compositional bias: basic and acidic residues.

This is an uncharacterized protein from Acidianus sp. F28 (AFV-2).